The primary structure comprises 63 residues: Hyphancin-3F (63 aa).

A signal peptide spans 1–22 (MNFSRILFFVFACFVALASVSA). A propeptide spans 23–26 (APEP) (removed by a dipeptidylpeptidase). Leucine amide is present on L61.

This sequence belongs to the cecropin family.

The protein localises to the secreted. Functionally, has antibacterial activity. The sequence is that of Hyphancin-3F from Hyphantria cunea (Fall webworm moth).